The following is an 831-amino-acid chain: DNA ligase (831 aa).

Residues 34 to 38 (DADYD), 83 to 84 (SL), and Glu114 contribute to the NAD(+) site. Residue Lys116 is the N6-AMP-lysine intermediate of the active site. NAD(+) contacts are provided by Arg137, Glu174, Lys291, and Lys315. Cys409, Cys412, Cys427, and Cys433 together coordinate Zn(2+). Residues 749–831 (AHTAPLNGQS…LDFLEQYSAQ (83 aa)) form the BRCT domain.

It belongs to the NAD-dependent DNA ligase family. LigA subfamily. Requires Mg(2+) as cofactor. Mn(2+) is required as a cofactor.

It catalyses the reaction NAD(+) + (deoxyribonucleotide)n-3'-hydroxyl + 5'-phospho-(deoxyribonucleotide)m = (deoxyribonucleotide)n+m + AMP + beta-nicotinamide D-nucleotide.. Functionally, DNA ligase that catalyzes the formation of phosphodiester linkages between 5'-phosphoryl and 3'-hydroxyl groups in double-stranded DNA using NAD as a coenzyme and as the energy source for the reaction. It is essential for DNA replication and repair of damaged DNA. The polypeptide is DNA ligase (Xylella fastidiosa (strain M12)).